The primary structure comprises 177 residues: Large ribosomal subunit protein uL6 (177 aa).

Belongs to the universal ribosomal protein uL6 family. In terms of assembly, part of the 50S ribosomal subunit.

Its function is as follows. This protein binds to the 23S rRNA, and is important in its secondary structure. It is located near the subunit interface in the base of the L7/L12 stalk, and near the tRNA binding site of the peptidyltransferase center. In Photobacterium profundum (strain SS9), this protein is Large ribosomal subunit protein uL6.